Reading from the N-terminus, the 134-residue chain is Large ribosomal subunit protein bL12 (134 aa).

The protein belongs to the bacterial ribosomal protein bL12 family. Homodimer. Part of the ribosomal stalk of the 50S ribosomal subunit. Forms a multimeric L10(L12)X complex, where L10 forms an elongated spine to which 2 to 4 L12 dimers bind in a sequential fashion. Binds GTP-bound translation factors.

Its function is as follows. Forms part of the ribosomal stalk which helps the ribosome interact with GTP-bound translation factors. Is thus essential for accurate translation. The sequence is that of Large ribosomal subunit protein bL12 from Anaplasma phagocytophilum (strain HZ).